We begin with the raw amino-acid sequence, 193 residues long: Ubiquitin-conjugating enzyme E2 E1 (193 aa).

A disordered region spans residues 1–45 (MSDDDSRASTSSSSSSSSNQQTEKETNTPKKKESKVSMSKNSKLL). The residue at position 2 (S2) is an N-acetylserine. Residues 8–18 (ASTSSSSSSSS) are compositionally biased toward low complexity. A compositionally biased stretch (basic and acidic residues) spans 22–35 (TEKETNTPKKKESK). Positions 36-45 (VSMSKNSKLL) are enriched in polar residues. Positions 47-193 (TSAKRIQKEL…ARQWTKRYAT (147 aa)) constitute a UBC core domain. C131 acts as the Glycyl thioester intermediate in catalysis. K136 participates in a covalent cross-link: Glycyl lysine isopeptide (Lys-Gly) (interchain with G-Cter in ISG15).

Belongs to the ubiquitin-conjugating enzyme family. As to quaternary structure, interacts with RNF14. ISGylation suppresses ubiquitin E2 enzyme activity. In terms of processing, autoubiquitinated in vitro.

The protein resides in the nucleus. It catalyses the reaction S-ubiquitinyl-[E1 ubiquitin-activating enzyme]-L-cysteine + [E2 ubiquitin-conjugating enzyme]-L-cysteine = [E1 ubiquitin-activating enzyme]-L-cysteine + S-ubiquitinyl-[E2 ubiquitin-conjugating enzyme]-L-cysteine.. It carries out the reaction S-ubiquitinyl-[E1 ubiquitin-activating enzyme]-L-cysteine + [acceptor protein]-L-lysine = [E1 ubiquitin-activating enzyme]-L-cysteine + N(6)-monoubiquitinyl-[acceptor protein]-L-lysine.. It functions in the pathway protein modification; protein ubiquitination. In terms of biological role, accepts ubiquitin from the E1 complex and catalyzes its covalent attachment to other proteins. Catalyzes the covalent attachment of ISG15 to other proteins. Mediates the selective degradation of short-lived and abnormal proteins. In vitro also catalyzes 'Lys-48'-linked polyubiquitination. Catalyzes monoubiquitination of other proteins in both an E3-dependent and E3-independent manner. This chain is Ubiquitin-conjugating enzyme E2 E1, found in Homo sapiens (Human).